A 454-amino-acid chain; its full sequence is Mitochondrial dynamics protein MID49 (454 aa).

Residues 1 to 22 (MAEFSQKRGKRRGDEGLGSMVD) are Mitochondrial intermembrane-facing. Residues 23–43 (FLLANARLVLGVGGAAVLGIA) traverse the membrane as a helical segment. Residues 44-454 (TLAVKRFIDR…SGLQEPEGLL (411 aa)) lie on the Cytoplasmic side of the membrane. A disordered region spans residues 76 to 119 (ATPHLQPRPPPAALSQPVLPLAPSSSAPEGPAKSDPEVTPQLSS). Positions 88 to 108 (ALSQPVLPLAPSSSAPEGPAK) are enriched in low complexity.

This sequence belongs to the MID49/MID51 family. As to quaternary structure, interacts with DNM1L.

It localises to the mitochondrion outer membrane. Mitochondrial outer membrane protein which regulates mitochondrial organization. It is required for mitochondrial fission and promotes the recruitment and association of the fission mediator dynamin-related protein 1 (DNM1L) to the mitochondrial surface independently of the mitochondrial fission FIS1 and MFF proteins. Regulates DNM1L GTPase activity. The chain is Mitochondrial dynamics protein MID49 (MIEF2) from Pongo abelii (Sumatran orangutan).